The chain runs to 469 residues: Probable Xaa-Pro aminopeptidase PEPP (469 aa).

Mn(2+) is bound by residues Asp264, Asp275, Glu398, and Glu438.

It belongs to the peptidase M24B family. Mn(2+) serves as cofactor.

The enzyme catalyses Release of any N-terminal amino acid, including proline, that is linked to proline, even from a dipeptide or tripeptide.. In terms of biological role, catalyzes the removal of a penultimate prolyl residue from the N-termini of peptides. The chain is Probable Xaa-Pro aminopeptidase PEPP (PEPP) from Ajellomyces capsulatus (strain G186AR / H82 / ATCC MYA-2454 / RMSCC 2432) (Darling's disease fungus).